We begin with the raw amino-acid sequence, 199 residues long: Recombination protein RecR (199 aa).

The segment at 58-73 adopts a C4-type zinc-finger fold; that stretch reads CSRCFYFTEEDPCPLC. The region spanning 81–176 is the Toprim domain; sequence QLICVVEEPQ…KVTRLAHGIP (96 aa).

The protein belongs to the RecR family.

Functionally, may play a role in DNA repair. It seems to be involved in an RecBC-independent recombinational process of DNA repair. It may act with RecF and RecO. The polypeptide is Recombination protein RecR (Syntrophotalea carbinolica (strain DSM 2380 / NBRC 103641 / GraBd1) (Pelobacter carbinolicus)).